The primary structure comprises 506 residues: 2-isopropylmalate synthase (506 aa).

Residues 4–266 (ILFMDTTLRD…EPSMTLKEIK (263 aa)) form the Pyruvate carboxyltransferase domain. 4 residues coordinate Mn(2+): aspartate 13, histidine 201, histidine 203, and asparagine 237. The segment at 390–506 (NITQLQVHFV…KLKSFIQLVK (117 aa)) is regulatory domain.

It belongs to the alpha-IPM synthase/homocitrate synthase family. LeuA type 1 subfamily. As to quaternary structure, homodimer. The cofactor is Mn(2+).

The protein localises to the cytoplasm. It carries out the reaction 3-methyl-2-oxobutanoate + acetyl-CoA + H2O = (2S)-2-isopropylmalate + CoA + H(+). It functions in the pathway amino-acid biosynthesis; L-leucine biosynthesis; L-leucine from 3-methyl-2-oxobutanoate: step 1/4. Catalyzes the condensation of the acetyl group of acetyl-CoA with 3-methyl-2-oxobutanoate (2-ketoisovalerate) to form 3-carboxy-3-hydroxy-4-methylpentanoate (2-isopropylmalate). This Bacillus cereus (strain 03BB102) protein is 2-isopropylmalate synthase.